Consider the following 154-residue polypeptide: MAPARAGCCPLLLLLLGLWVAQIPVSAKPKDMTSSQWFKTQHVQPSPEACYLAMSNISKYIEWCKDLNTFLHEPFSSVATTCQTPNIACKNGHKNCHQSSGPMSLTMCELTSGKYPNCRYKEKHLNAPYIVARDPPQQGDPGYPLVPVHLDKVV.

The first 27 residues, 1–27, serve as a signal peptide directing secretion; that stretch reads MAPARAGCCPLLLLLLGLWVAQIPVSA. Histidine 42 (proton acceptor) is an active-site residue. Disulfide bonds link cysteine 64–cysteine 118 and cysteine 89–cysteine 96. Substrate contacts are provided by residues 65–69 and lysine 90; that span reads KDLNT. Histidine 149 serves as the catalytic Proton donor.

This sequence belongs to the pancreatic ribonuclease family.

It is found in the secreted. In terms of biological role, has a low ribonuclease activity. The polypeptide is Ribonuclease 8 (RNASE8) (Chlorocebus aethiops (Green monkey)).